A 1697-amino-acid polypeptide reads, in one-letter code: Phosphatidylinositol 3-kinase 3 (1697 aa).

Disordered stretches follow at residues 57–91, 169–229, 244–279, 310–376, 398–428, and 440–504; these read RSIN…TQPC, INNN…DSSI, KTTE…ENEI, KKNN…NSVG, SWTS…SGSS, and DLLK…NNDE. 3 stretches are compositionally biased toward low complexity: residues 60–87, 170–196, and 212–222; these read NNNN…NNNN and NNNSNNNNNIN. 2 stretches are compositionally biased toward low complexity: residues 312 to 374 and 398 to 408; these read NNNN…TTNS and SWTSSKPTSSS. Polar residues-rich tracts occupy residues 409–428 and 444–456; these read IGFA…SGSS and SPSS…SDIF. Positions 457–503 are enriched in low complexity; sequence NENNNNNNNNNNNNNNNNNNNNNNNNNNNNNNNNEELINNNNNNNND. In terms of domain architecture, PI3K-RBD spans 737 to 823; sequence PEFFVIRVHL…KGEIDLTMVE (87 aa). Positions 888-1036 constitute a C2 PI3K-type domain; that stretch reads VTENLQVRLL…QAIIIAFEFK (149 aa). Residues 1060-1238 enclose the PIK helical domain; the sequence is GNELPVVTME…RVLSSGFLRY (179 aa). In terms of domain architecture, PI3K/PI4K catalytic spans 1304–1581; sequence IPEKCKSMDS…LIHESIGTLT (278 aa). Residues 1310–1316 form a G-loop region; it reads SMDSAKV. Residues 1447–1455 are catalytic loop; the sequence is GIGDRHNDN. The activation loop stretch occupies residues 1466–1492; that stretch reads HIDFGHFLGNFKTFAGFQREKAPFVLT. A compositionally biased stretch (low complexity) spans 1609–1625; that stretch reads ASSLNLNKNKPSSQSKL. Residues 1609–1697 are disordered; the sequence is ASSLNLNKNK…DTEKENSIDK (89 aa). 5 consecutive repeat copies span residues 1622-1626, 1627-1631, 1632-1636, 1642-1646, and 1647-1651. The tract at residues 1622–1651 is 5 X 5 AA approximate repeats; sequence QSKLDLSRSDLSRSDSSRSDSSRLDLSRSD. 2 stretches are compositionally biased toward basic and acidic residues: residues 1626–1681 and 1688–1697; these read DLSR…DKDN and DTEKENSIDK. Positions 1659–1672 are 7 X 2 AA tandem repeats of K-E; it reads KEKEKEKEKEKEKE.

This sequence belongs to the PI3/PI4-kinase family.

The enzyme catalyses a 1,2-diacyl-sn-glycero-3-phospho-(1D-myo-inositol) + ATP = a 1,2-diacyl-sn-glycero-3-phospho-(1D-myo-inositol-3-phosphate) + ADP + H(+). The sequence is that of Phosphatidylinositol 3-kinase 3 (pikC) from Dictyostelium discoideum (Social amoeba).